The following is a 110-amino-acid chain: Large ribosomal subunit protein uL22 (110 aa).

The protein belongs to the universal ribosomal protein uL22 family. In terms of assembly, part of the 50S ribosomal subunit.

This protein binds specifically to 23S rRNA; its binding is stimulated by other ribosomal proteins, e.g. L4, L17, and L20. It is important during the early stages of 50S assembly. It makes multiple contacts with different domains of the 23S rRNA in the assembled 50S subunit and ribosome. Its function is as follows. The globular domain of the protein is located near the polypeptide exit tunnel on the outside of the subunit, while an extended beta-hairpin is found that lines the wall of the exit tunnel in the center of the 70S ribosome. This is Large ribosomal subunit protein uL22 from Shigella flexneri serotype 5b (strain 8401).